Here is a 180-residue protein sequence, read N- to C-terminus: HTH-type transcriptional regulator EcpR (180 aa).

The HTH luxR-type domain occupies 122 to 180 (KDIKKDKITDREMKIIRMTAQGMQPKSIARIENCSVKTVYTHRRNAEAKLYSKIYKLVQ). Positions 146–165 (PKSIARIENCSVKTVYTHRR) form a DNA-binding region, H-T-H motif.

This sequence belongs to the EcpR/MatA family.

It is found in the cytoplasm. Part of the ecpRABCDE operon, which encodes the E.coli common pilus (ECP). ECP plays a dual role in early-stage biofilm development and host cell recognition. Positively regulates the expression of the ecp operon. The chain is HTH-type transcriptional regulator EcpR (ecpR) from Klebsiella pneumoniae subsp. pneumoniae (strain ATCC 700721 / MGH 78578).